The sequence spans 338 residues: RNA 3'-terminal phosphate cyclase (338 aa).

Residues Gln-103 and 283-287 each bind ATP; that span reads YLADQ. His-308 acts as the Tele-AMP-histidine intermediate in catalysis.

It belongs to the RNA 3'-terminal cyclase family. Type 1 subfamily.

Its subcellular location is the cytoplasm. The enzyme catalyses a 3'-end 3'-phospho-ribonucleotide-RNA + ATP = a 3'-end 2',3'-cyclophospho-ribonucleotide-RNA + AMP + diphosphate. Catalyzes the conversion of 3'-phosphate to a 2',3'-cyclic phosphodiester at the end of RNA. The mechanism of action of the enzyme occurs in 3 steps: (A) adenylation of the enzyme by ATP; (B) transfer of adenylate to an RNA-N3'P to produce RNA-N3'PP5'A; (C) and attack of the adjacent 2'-hydroxyl on the 3'-phosphorus in the diester linkage to produce the cyclic end product. The biological role of this enzyme is unknown but it is likely to function in some aspects of cellular RNA processing. The chain is RNA 3'-terminal phosphate cyclase from Escherichia coli O8 (strain IAI1).